The chain runs to 332 residues: Anthranilate phosphoribosyltransferase (332 aa).

Residues glycine 79, 82–83, threonine 87, 89–92, 107–115, and alanine 119 contribute to the 5-phospho-alpha-D-ribose 1-diphosphate site; these read GD, NIST, and KHGNYGATS. Residue glycine 79 participates in anthranilate binding. Position 91 (serine 91) interacts with Mg(2+). Anthranilate is bound at residue asparagine 110. An anthranilate-binding site is contributed by arginine 165. Mg(2+) is bound by residues aspartate 223 and glutamate 224.

The protein belongs to the anthranilate phosphoribosyltransferase family. In terms of assembly, homodimer. Mg(2+) serves as cofactor.

It carries out the reaction N-(5-phospho-beta-D-ribosyl)anthranilate + diphosphate = 5-phospho-alpha-D-ribose 1-diphosphate + anthranilate. Its pathway is amino-acid biosynthesis; L-tryptophan biosynthesis; L-tryptophan from chorismate: step 2/5. In terms of biological role, catalyzes the transfer of the phosphoribosyl group of 5-phosphorylribose-1-pyrophosphate (PRPP) to anthranilate to yield N-(5'-phosphoribosyl)-anthranilate (PRA). The sequence is that of Anthranilate phosphoribosyltransferase from Bacteroides thetaiotaomicron (strain ATCC 29148 / DSM 2079 / JCM 5827 / CCUG 10774 / NCTC 10582 / VPI-5482 / E50).